The primary structure comprises 617 residues: Putative type VI secretion system protein VgrGB (617 aa).

The tract at residues 449-469 is disordered; it reads RTFHATNPSPYPLPASKTRTS.

Belongs to the VgrG protein family.

In terms of biological role, a Vgr protein that is probably part of a type VI secretion system (T6SS). May be required for export of proteins involved in Rhs-mediated cellular contact-dependent growth inhibition (CDI). The polypeptide is Putative type VI secretion system protein VgrGB (vgrGB) (Dickeya dadantii (strain 3937) (Erwinia chrysanthemi (strain 3937))).